We begin with the raw amino-acid sequence, 389 residues long: Chalcone synthase 9 (389 aa).

C164 is an active-site residue.

This sequence belongs to the thiolase-like superfamily. Chalcone/stilbene synthases family.

It carries out the reaction (E)-4-coumaroyl-CoA + 3 malonyl-CoA + 3 H(+) = 2',4,4',6'-tetrahydroxychalcone + 3 CO2 + 4 CoA. Its pathway is secondary metabolite biosynthesis; flavonoid biosynthesis. The primary product of this enzyme is 4,2',4',6'-tetrahydroxychalcone (also termed naringenin-chalcone or chalcone) which can under specific conditions spontaneously isomerize into naringenin. The sequence is that of Chalcone synthase 9 (CHS9) from Daucus carota (Wild carrot).